The sequence spans 420 residues: Serine/threonine-protein kinase PCRK2 (420 aa).

A disordered region spans residues 1–64 (MKCFLFPLGD…SNTSMSAREN (64 aa)). Residues 22-36 (SPTSNFSDVNKSGSD) show a composition bias toward polar residues. Positions 42–58 (VSGTSTVSSTGRNSNTS) are enriched in low complexity. A Phosphothreonine modification is found at threonine 70. Residues 81–366 (FSRSGMIGEG…EVLEMVTKIV (286 aa)) enclose the Protein kinase domain. ATP-binding positions include 87 to 95 (IGEGGFGCV) and lysine 115. Tyrosine 164 bears the Phosphotyrosine mark. The active-site Proton acceptor is the aspartate 215. Serine 219 and serine 249 each carry phosphoserine. Threonine 250 and threonine 255 each carry phosphothreonine. Tyrosine 263 carries the phosphotyrosine modification. The tract at residues 369-396 (SSPGNGGKKPQLVPLKSQETSRVEEGKN) is disordered. Positions 387–396 (ETSRVEEGKN) are enriched in basic and acidic residues.

Belongs to the protein kinase superfamily. Ser/Thr protein kinase family. In terms of assembly, interacts with FLS2.

The protein resides in the cell membrane. The catalysed reaction is L-seryl-[protein] + ATP = O-phospho-L-seryl-[protein] + ADP + H(+). The enzyme catalyses L-threonyl-[protein] + ATP = O-phospho-L-threonyl-[protein] + ADP + H(+). Functions redundantly with PCRK1 in basal resistance against bacterial pathogens and in regulation of plant immunity. Functions together with PCRK1 downstream of the pathogen-associated molecular pattern (PAMP) receptor FLS2. Contributes to the induction of SARD1 and CBP60G, which are transcriptional activator of ICS1, an enzyme involved in salicylate (SA) biosynthesis upon pathogen attack. The protein is Serine/threonine-protein kinase PCRK2 of Arabidopsis thaliana (Mouse-ear cress).